Here is a 378-residue protein sequence, read N- to C-terminus: Glutamate 5-kinase (378 aa).

Residue lysine 19 participates in ATP binding. 3 residues coordinate substrate: serine 59, aspartate 146, and asparagine 158. ATP contacts are provided by residues 178–179 and 220–226; these read TD and TGGMATK. Residues 285–363 form the PUA domain; that stretch reads QGQIQVDAGA…GEIGEILGYK (79 aa).

The protein belongs to the glutamate 5-kinase family.

It localises to the cytoplasm. It carries out the reaction L-glutamate + ATP = L-glutamyl 5-phosphate + ADP. The protein operates within amino-acid biosynthesis; L-proline biosynthesis; L-glutamate 5-semialdehyde from L-glutamate: step 1/2. In terms of biological role, catalyzes the transfer of a phosphate group to glutamate to form L-glutamate 5-phosphate. This is Glutamate 5-kinase from Moorella thermoacetica (strain ATCC 39073 / JCM 9320).